A 493-amino-acid polypeptide reads, in one-letter code: Polyamine aminopropyltransferase 2 (493 aa).

The next 7 membrane-spanning stretches (helical) occupy residues 9 to 29 (LCIF…ATLA), 32 to 52 (LLGN…LSMG), 68 to 88 (LAFV…VPIA), 101 to 121 (VIYG…PLAV), 137 to 157 (VLEK…YLFL), 161 to 181 (GLPL…FLLV), and 188 to 208 (KFLK…AVGH). The segment at 187–448 (KKFLKFLAIF…PLNFENFELK (262 aa)) is spermidine synthase. Positions 202–437 (ATYAVGHKRI…GEWGMVIGSK (236 aa)) constitute a PABS domain. Glutamine 233 is a binding site for S-methyl-5'-thioadenosine. Spermidine contacts are provided by histidine 263 and aspartate 287. S-methyl-5'-thioadenosine contacts are provided by residues aspartate 306 and 340-341 (DA). Aspartate 358 serves as the catalytic Proton acceptor.

This sequence belongs to the spermidine/spermine synthase family. As to quaternary structure, homodimer or homotetramer.

It localises to the cell membrane. It catalyses the reaction S-adenosyl 3-(methylsulfanyl)propylamine + putrescine = S-methyl-5'-thioadenosine + spermidine + H(+). It functions in the pathway amine and polyamine biosynthesis; spermidine biosynthesis; spermidine from putrescine: step 1/1. Catalyzes the irreversible transfer of a propylamine group from the amino donor S-adenosylmethioninamine (decarboxy-AdoMet) to putrescine (1,4-diaminobutane) to yield spermidine. This chain is Polyamine aminopropyltransferase 2, found in Aquifex aeolicus (strain VF5).